Reading from the N-terminus, the 404-residue chain is Sulfate adenylyltransferase (404 aa).

This sequence belongs to the sulfate adenylyltransferase family.

The enzyme catalyses sulfate + ATP + H(+) = adenosine 5'-phosphosulfate + diphosphate. The protein operates within sulfur metabolism; hydrogen sulfide biosynthesis; sulfite from sulfate: step 1/3. This Chlorobium chlorochromatii (strain CaD3) protein is Sulfate adenylyltransferase.